Here is a 262-residue protein sequence, read N- to C-terminus: Thiazole synthase (262 aa).

Lysine 97 functions as the Schiff-base intermediate with DXP in the catalytic mechanism. 1-deoxy-D-xylulose 5-phosphate is bound by residues glycine 158, 185-186 (AG), and 207-208 (NT).

Belongs to the ThiG family. Homotetramer. Forms heterodimers with either ThiH or ThiS.

The protein localises to the cytoplasm. The catalysed reaction is [ThiS sulfur-carrier protein]-C-terminal-Gly-aminoethanethioate + 2-iminoacetate + 1-deoxy-D-xylulose 5-phosphate = [ThiS sulfur-carrier protein]-C-terminal Gly-Gly + 2-[(2R,5Z)-2-carboxy-4-methylthiazol-5(2H)-ylidene]ethyl phosphate + 2 H2O + H(+). It functions in the pathway cofactor biosynthesis; thiamine diphosphate biosynthesis. Catalyzes the rearrangement of 1-deoxy-D-xylulose 5-phosphate (DXP) to produce the thiazole phosphate moiety of thiamine. Sulfur is provided by the thiocarboxylate moiety of the carrier protein ThiS. In vitro, sulfur can be provided by H(2)S. The sequence is that of Thiazole synthase from Neisseria gonorrhoeae (strain ATCC 700825 / FA 1090).